Consider the following 445-residue polypeptide: Homoserine O-succinyltransferase (445 aa).

An AB hydrolase-1 domain is found at 45–411 (NAVLICHALS…APHGHDSFLF (367 aa)). Ser-153 functions as the Nucleophile in the catalytic mechanism. Arg-223 is a substrate binding site. Active-site residues include Asp-373 and His-406. Asp-407 provides a ligand contact to substrate.

It belongs to the AB hydrolase superfamily. MetX family. As to quaternary structure, homodimer.

Its subcellular location is the cytoplasm. The enzyme catalyses L-homoserine + succinyl-CoA = O-succinyl-L-homoserine + CoA. The protein operates within amino-acid biosynthesis; L-methionine biosynthesis via de novo pathway; O-succinyl-L-homoserine from L-homoserine: step 1/1. Transfers a succinyl group from succinyl-CoA to L-homoserine, forming succinyl-L-homoserine. The protein is Homoserine O-succinyltransferase of Psychrobacter arcticus (strain DSM 17307 / VKM B-2377 / 273-4).